The following is a 290-amino-acid chain: UPF0761 membrane protein YihY (290 aa).

6 consecutive transmembrane segments (helical) span residues 44–64 (LLSL…FPMF), 104–124 (VGAC…DSAL), 140–160 (FAVY…SLAI), 183–203 (IFPL…VPTI), 210–230 (AIVG…GFAL), and 244–264 (VLAV…IVLL).

This sequence belongs to the UPF0761 family.

Its subcellular location is the cell inner membrane. This is UPF0761 membrane protein YihY from Escherichia fergusonii (strain ATCC 35469 / DSM 13698 / CCUG 18766 / IAM 14443 / JCM 21226 / LMG 7866 / NBRC 102419 / NCTC 12128 / CDC 0568-73).